The chain runs to 640 residues: Spindle assembly abnormal protein 6 homolog (640 aa).

Positions 40–92 (VHKKDLAVRLTDDADPFFLYNLVISEEDFQSLKSQQGLLVDFSAFPQKFIDLL) constitute a PISA domain. Residues 154-475 (LARCLKCLKE…KQLLKTNENV (322 aa)) adopt a coiled-coil conformation.

As to quaternary structure, nine homodimers form a cartwheel structure with an internal diameter of 23 nM and radial spokes connecting to the microtubule triplets.

Its subcellular location is the cytoplasm. The protein localises to the cytoskeleton. The protein resides in the microtubule organizing center. It localises to the centrosome. Central scaffolding component of the centrioles ensuring their 9-fold symmetry. Required for centrosome biogenesis and duplication: required both for mother-centriole-dependent centriole duplication and deuterosome-dependent centriole amplification in multiciliated cells. This Gallus gallus (Chicken) protein is Spindle assembly abnormal protein 6 homolog (SASS6).